The following is a 105-amino-acid chain: Nucleoid-associated protein Ccur92_18190 (105 aa).

The protein belongs to the YbaB/EbfC family. As to quaternary structure, homodimer.

It localises to the cytoplasm. The protein resides in the nucleoid. Binds to DNA and alters its conformation. May be involved in regulation of gene expression, nucleoid organization and DNA protection. This is Nucleoid-associated protein Ccur92_18190 from Campylobacter curvus (strain 525.92).